The sequence spans 442 residues: D-inositol 3-phosphate glycosyltransferase (442 aa).

1D-myo-inositol 3-phosphate is bound at residue H26. Residues 32–33 and G40 each bind UDP-N-acetyl-alpha-D-glucosamine; that span reads QP. Residues 37 to 42, K95, Y128, T152, and R172 each bind 1D-myo-inositol 3-phosphate; that span reads DAGGMN. UDP-N-acetyl-alpha-D-glucosamine-binding residues include R246, K251, and Q304. Residues Y313, R314, and A316 each coordinate Mg(2+). Positions 326 and 334 each coordinate UDP-N-acetyl-alpha-D-glucosamine. T340 is a Mg(2+) binding site.

The protein belongs to the glycosyltransferase group 1 family. MshA subfamily. As to quaternary structure, homodimer.

The enzyme catalyses 1D-myo-inositol 3-phosphate + UDP-N-acetyl-alpha-D-glucosamine = 1D-myo-inositol 2-acetamido-2-deoxy-alpha-D-glucopyranoside 3-phosphate + UDP + H(+). In terms of biological role, catalyzes the transfer of a N-acetyl-glucosamine moiety to 1D-myo-inositol 3-phosphate to produce 1D-myo-inositol 2-acetamido-2-deoxy-glucopyranoside 3-phosphate in the mycothiol biosynthesis pathway. This is D-inositol 3-phosphate glycosyltransferase from Mycolicibacterium gilvum (strain PYR-GCK) (Mycobacterium gilvum (strain PYR-GCK)).